Here is a 152-residue protein sequence, read N- to C-terminus: Transcriptional regulator MraZ (152 aa).

SpoVT-AbrB domains are found at residues 7-51 (KERH…APDR) and 89-132 (LEMV…DPQR).

It belongs to the MraZ family. As to quaternary structure, forms oligomers.

Its subcellular location is the cytoplasm. It is found in the nucleoid. The protein is Transcriptional regulator MraZ of Pelodictyon phaeoclathratiforme (strain DSM 5477 / BU-1).